The primary structure comprises 1124 residues: Eukaryotic translation initiation factor 3 subunit A (1124 aa).

A coiled-coil region spans residues 96-124 (LKMAEERTEQAQQQSSQATVDIDDLDNLA). In terms of domain architecture, PCI spans 317–498 (IQRMTTHVLI…ECVHFGTDLS (182 aa)). Basic and acidic residues-rich tracts occupy residues 812–851 (EERRRIEEELRKQKEEADRIERERRAEERRIQDEKNRQLA) and 860–883 (EVERRRREELEQMKEADGRRERRP). Residues 812-1124 (EERRRIEEEL…EEGWTDVKHR (313 aa)) form a disordered region. Residues 900–910 (PAAAAPANPAA) show a composition bias toward low complexity. Composition is skewed to basic and acidic residues over residues 928–952 (PRERGGETGPKDKWRTGPEDHEKDG), 960–990 (RGGDMRRGQDDRGPIRRGGGEERGEREDRGP), 1007–1048 (PRRD…RGGG), and 1063–1100 (DDNRRGPRDEGRQDTWRNTRQDAAPKQKEDRPQREARP).

It belongs to the eIF-3 subunit A family. In terms of assembly, component of the eukaryotic translation initiation factor 3 (eIF-3) complex.

It is found in the cytoplasm. RNA-binding component of the eukaryotic translation initiation factor 3 (eIF-3) complex, which is involved in protein synthesis of a specialized repertoire of mRNAs and, together with other initiation factors, stimulates binding of mRNA and methionyl-tRNAi to the 40S ribosome. The eIF-3 complex specifically targets and initiates translation of a subset of mRNAs involved in cell proliferation. The chain is Eukaryotic translation initiation factor 3 subunit A from Anopheles gambiae (African malaria mosquito).